We begin with the raw amino-acid sequence, 328 residues long: MMWRWTLMLLLLLLRHWALGKPSPDAGPHGQDRVHHGTPLSEAPHDDAHGNFQYDHEAFLGRDVAKEFDQLTPEESQARLGRIVDRMDLAGDSDGWVSLAELRAWIAHTQQRHIRDSVSAAWHTYDTDRDGRVGWEELRNATYGHYEPGEEFHDVEDAETYKKMLARDERRFRVADQDGDSMATREELTAFLHPEEFPHMRDIVVAETLEDLDKNKDGYVQVEEYIADLYSAEPGEEEPAWVQTERQQFRDFRDLNKDGRLDGSEVGYWVLPPSQDQPLVEANHLLHESDTDKDGRLSKAEILSNWNMFVGSQATNYGEDLTRHHDEL.

A signal peptide spans M1–G20. Positions P24 to A48 are disordered. EF-hand domains lie at E75–R112, H113–P148, K163–P198, M200–G235, W241–D276, and Q277–S312. The Ca(2+) site is built by D92, D94, W96, E101, D126, D128, D130, R132, and E137. N-linked (GlcNAc...) asparagine glycosylation is present at N140. Ca(2+)-binding residues include D176, D178, D180, M182, E187, D213, N215, D217, Y219, E224, D254, N256, D258, R260, E265, D290, D292, D294, R296, and E301. The short motif at H325–L328 is the Prevents secretion from ER element.

This sequence belongs to the CREC family. Interacts with PCSK6 (immature form including the propeptide); probably involved in the maturation and the secretion of PCSK6. Post-translationally, N-glycosylated. In terms of processing, degraded by PCSK6 and other endoproteases including FURIN and PCSK5.

The protein localises to the endoplasmic reticulum lumen. Probable molecular chaperone assisting protein biosynthesis and transport in the endoplasmic reticulum. Required for the proper biosynthesis and transport of pulmonary surfactant-associated protein A/SP-A, pulmonary surfactant-associated protein D/SP-D and the lipid transporter ABCA3. By regulating both the proper expression and the degradation through the endoplasmic reticulum-associated protein degradation pathway of these proteins plays a crucial role in pulmonary surfactant homeostasis. Has an anti-fibrotic activity by negatively regulating the secretion of type I and type III collagens. This calcium-binding protein also transiently associates with immature PCSK6 and regulates its secretion. This Rattus norvegicus (Rat) protein is Reticulocalbin-3.